The sequence spans 360 residues: UDP-N-acetylglucosamine--N-acetylmuramyl-(pentapeptide) pyrophosphoryl-undecaprenol N-acetylglucosamine transferase (360 aa).

Residues 16 to 18 (TGG), N128, R165, S191, I247, 266 to 271 (ALTVSE), and Q292 each bind UDP-N-acetyl-alpha-D-glucosamine.

Belongs to the glycosyltransferase 28 family. MurG subfamily.

It localises to the cell inner membrane. The catalysed reaction is di-trans,octa-cis-undecaprenyl diphospho-N-acetyl-alpha-D-muramoyl-L-alanyl-D-glutamyl-meso-2,6-diaminopimeloyl-D-alanyl-D-alanine + UDP-N-acetyl-alpha-D-glucosamine = di-trans,octa-cis-undecaprenyl diphospho-[N-acetyl-alpha-D-glucosaminyl-(1-&gt;4)]-N-acetyl-alpha-D-muramoyl-L-alanyl-D-glutamyl-meso-2,6-diaminopimeloyl-D-alanyl-D-alanine + UDP + H(+). It participates in cell wall biogenesis; peptidoglycan biosynthesis. Functionally, cell wall formation. Catalyzes the transfer of a GlcNAc subunit on undecaprenyl-pyrophosphoryl-MurNAc-pentapeptide (lipid intermediate I) to form undecaprenyl-pyrophosphoryl-MurNAc-(pentapeptide)GlcNAc (lipid intermediate II). This is UDP-N-acetylglucosamine--N-acetylmuramyl-(pentapeptide) pyrophosphoryl-undecaprenol N-acetylglucosamine transferase from Shewanella amazonensis (strain ATCC BAA-1098 / SB2B).